A 179-amino-acid polypeptide reads, in one-letter code: UPF0302 protein BLi02393/BL02764 (179 aa).

Belongs to the UPF0302 family.

The chain is UPF0302 protein BLi02393/BL02764 from Bacillus licheniformis (strain ATCC 14580 / DSM 13 / JCM 2505 / CCUG 7422 / NBRC 12200 / NCIMB 9375 / NCTC 10341 / NRRL NRS-1264 / Gibson 46).